Consider the following 144-residue polypeptide: Large ribosomal subunit protein uL15 (144 aa).

The interval methionine 1 to valine 48 is disordered. A compositionally biased stretch (gly residues) spans arginine 21 to alanine 31.

This sequence belongs to the universal ribosomal protein uL15 family. Part of the 50S ribosomal subunit.

In terms of biological role, binds to the 23S rRNA. This Cupriavidus taiwanensis (strain DSM 17343 / BCRC 17206 / CCUG 44338 / CIP 107171 / LMG 19424 / R1) (Ralstonia taiwanensis (strain LMG 19424)) protein is Large ribosomal subunit protein uL15.